The sequence spans 289 residues: N-methyltransferase FrzE (289 aa).

This sequence belongs to the methyltransferase superfamily.

It catalyses the reaction (1S,4S)-4-[(4-hydroxyphenyl)methyl]-2,5-diazaspiro[bicyclo[3.2.1]octane-6,1'-cyclohexan]-4'-one + S-adenosyl-L-methionine = (1S,4S)-4-[(4-hydroxyphenyl)methyl]-2-methyl-2,5-diazaspiro[bicyclo[3.2.1]octane-6,1'-cyclohexan]-4'-one + S-adenosyl-L-homocysteine + H(+). It carries out the reaction (1S,4S)-4-[(4-methoxyphenyl)methyl]-2,5-diazaspiro[bicyclo[3.2.1]octane-6,1'-cyclohexan]-4'-one + S-adenosyl-L-methionine = (1S,4S)-4-[(4-methoxyphenyl)methyl]-2-methyl-2,5-diazaspiro[bicyclo[3.2.1]octane-6,1'-cyclohexan]-4'-one + S-adenosyl-L-homocysteine + H(+). It functions in the pathway secondary metabolite biosynthesis. Functionally, N-methyltransferase; part of the gene cluster that mediates the biosynthesis of the alkaloid (-)-FR901483, a potent immunosuppressant that shows efficacy in animal models and a probable inhibitor of purine nucleotide biosynthesis by targeting phosphoribosylpyrophosphate amidotransferase (PPAT). Within the pathway, FrzE methylates the amine at position C10'. The biosynthesis of (-)-FR901483 starts with the condensation of two L-tyrosines to yield (S,S)-dityrosyl-piperazine. This process occurs in 3 steps with the non-canonical nonribosomal peptide synthetase FrzA catalyzing the reduction of L-tyrosine into L-tyrosinal, the spontaneous condensation of 2 L-tyrosinal units, and the subsequent reduction by the NmrA-like family domain-containing oxidoreductase FrzB. The cytochrome P450 monooxygenase FrzC then performs coupling between N10 and C1' to morph the piperazine into a 1,4-diazabicyclo[3.2.1]octane spiro-fused to a 2,5-cyclohexadienone. The dienone portion is further reduced to cyclohexanone by the flavin-dependent reductase FrzD. The methyltranserases (MTs) FrzE and FrzF are then involved in the methylation at the C10' amine and the C4 phenolic oxygen, respectively. The order of the two MTs appear to be interchangeable. Cleavage of the C9-N10' bond by the dioxygenase FrzG then leads to formation of a conjugated iminium. In addition to the oxidation of C9, an additional dehydrogenation between C7 and C8 can occur to give a likely shunt product. The next biosynthetic step is the intramolecular aldol condensation catalyzed by the newly identified aldolase FrzH to yield an aza-tricyclic product with the formation of a C9-C3' bond. The short-chain dehydrogenase/reductase FrzI then produces dephospho-(-)-FR901483 that is phosphorylated at C4'-OH into (-)-FR901483 by the phosphotransferase FrzJ. In Cladobotryum sp, this protein is N-methyltransferase FrzE.